The sequence spans 68 residues: DNA-directed RNA polymerase subunit omega (68 aa).

The protein belongs to the RNA polymerase subunit omega family. As to quaternary structure, the RNAP catalytic core consists of 2 alpha, 1 beta, 1 beta' and 1 omega subunit. When a sigma factor is associated with the core the holoenzyme is formed, which can initiate transcription.

It catalyses the reaction RNA(n) + a ribonucleoside 5'-triphosphate = RNA(n+1) + diphosphate. Promotes RNA polymerase assembly. Latches the N- and C-terminal regions of the beta' subunit thereby facilitating its interaction with the beta and alpha subunits. This is DNA-directed RNA polymerase subunit omega from Chromobacterium violaceum (strain ATCC 12472 / DSM 30191 / JCM 1249 / CCUG 213 / NBRC 12614 / NCIMB 9131 / NCTC 9757 / MK).